Consider the following 38-residue polypeptide: Large ribosomal subunit protein bL36 (38 aa).

Belongs to the bacterial ribosomal protein bL36 family.

This is Large ribosomal subunit protein bL36 from Pseudomonas entomophila (strain L48).